We begin with the raw amino-acid sequence, 382 residues long: MKITKITTYRLPPRWMFLKIETDEGVVGWGEPVIEGRARTVEAAVHELGDYLIGQDPSRINDLWQVMYRAGFYRGGPILMSAIAGIDQALWDIKGKVLNAPVWQLMGGLVRDKIKAYSWVGGDRPADVIGGIKTLREIGFDTFKLNGCEELGLIDNSRAVDAAVNTVAQIREAFGNQIEFGLDFHGRVSAPMAKVLIKELEPYRPLFIEEPVLAEQAEYYPKLAAQTHIPLAAGERMFSRFDFKRVLEAGGISILQPDLSHAGGITECYKIAGMAEAYDVTLAPHCPLGPIALAACLHIDFVSYNAVLQEQSMGIHYNKGAELLDFVKNKEDFSMVGGFFKPLTKPGLGVEIDEAKVIEFSKNAPDWRNPLWRHEDNSVAEW.

Asp-183 is a Mg(2+) binding site. The active-site Proton donor is the His-185. Residues Glu-209 and Glu-235 each coordinate Mg(2+). His-285 (proton acceptor) is an active-site residue.

It belongs to the mandelate racemase/muconate lactonizing enzyme family. GalD subfamily. Requires Mg(2+) as cofactor.

It catalyses the reaction D-galactonate = 2-dehydro-3-deoxy-D-galactonate + H2O. It participates in carbohydrate acid metabolism; D-galactonate degradation; D-glyceraldehyde 3-phosphate and pyruvate from D-galactonate: step 1/3. Catalyzes the dehydration of D-galactonate to 2-keto-3-deoxy-D-galactonate. This Escherichia coli O9:H4 (strain HS) protein is D-galactonate dehydratase.